A 1189-amino-acid chain; its full sequence is Phosphatidylinositol 3,4,5-trisphosphate 5-phosphatase 1 (1189 aa).

The SH2 domain maps to 5-101; it reads WNHGNITRSK…GLVTHLQYPV (97 aa). The span at 103 to 117 shows a compositional bias: acidic residues; it reads LEEEDTGDDPEEDTV. Residues 103–132 form a disordered region; that stretch reads LEEEDTGDDPEEDTVESVVSPPELPPRNIP. The short motif at 124 to 129 is the SH3-binding 1 element; it reads PELPPR. Ser243 bears the Phosphoserine mark. Residues 870 to 906 are disordered; that stretch reads TERDESSGPKTLKSLTSHDPMKQWEVTSRAPPCSGSS. Residues 912–915 carry the NPXY motif 1 motif; that stretch reads NPNY. At Tyr915 the chain carries Phosphotyrosine. Positions 922–1189 are disordered; the sequence is GPPMPLHVKQ…PGPLGRTAMQ (268 aa). Positions 931–943 are enriched in polar residues; it reads QTLSPDQQPTAWS. At Ser934 the chain carries Phosphoserine. Position 944 is a phosphotyrosine (Tyr944). A Phosphoserine modification is found at Ser960. Over residues 961–971 the composition is skewed to pro residues; sequence PPTPPGQPPIS. A Phosphothreonine modification is found at Thr963. Positions 969–974 match the SH3-binding 2 motif; sequence PISPKK. Ser971 carries the phosphoserine modification. The interval 1016–1030 is interaction with DAB2; that stretch reads MFENPLYGSLSSFPK. Positions 1019-1022 match the NPXY motif 2 motif; the sequence is NPLY. Tyr1022 is subject to Phosphotyrosine. A compositionally biased stretch (basic and acidic residues) spans 1033–1047; the sequence is PRKDQESPKMPRKEP. The SH3-binding 3 signature appears at 1040–1051; the sequence is PKMPRKEPPPCP. The span at 1134–1145 shows a compositional bias: pro residues; that stretch reads PPTPTPRPPLPV. Residues 1157 to 1177 are compositionally biased toward basic and acidic residues; sequence KGRDYRDNTELPHHGKHRPEE.

This sequence belongs to the inositol 1,4,5-trisphosphate 5-phosphatase family. In terms of assembly, interacts with tyrosine phosphorylated form of SHC1. Interacts with tyrosine phosphorylated form of DOK1. Interacts with tyrosine phosphorylated form of DOK3. Interacts with tyrosine phosphorylated form of SLAMF1/CD150. Interacts with PTPN11 in response to IL-3. Interacts with receptor EPOR. Interacts with receptors MS4A2/FCER1B and FCER1G. Interacts with receptors FCGR2B and FCGR3. Interacts with receptor FCGR2A, leading to regulate gene expression during the phagocytic process. Interacts with GRB2. Interacts with PLCG1. Interacts with tyrosine kinases SRC and TEC. Interacts with c-Met/MET. Interacts with MILR1 (tyrosine-phosphorylated). Can weakly interact (via NPXY motif 2) with DAB2 (via PID domain); the interaction is impaired by tyrosine phosphorylation of the NPXY motif. Interacts with FCRL3 and FCRL6 (tyrosine phosphorylated form). Interacts (via SH2 domain) with tyrosine phosphorylated KLRC1 (via ITIM). Interacts with MPL/TPOR. Post-translationally, tyrosine phosphorylated by the members of the SRC family after exposure to a diverse array of extracellular stimuli such as cytokines, growth factors, antibodies, chemokines, integrin ligands and hypertonic and oxidative stress. Phosphorylated upon IgG receptor FCGR2B-binding. In terms of tissue distribution, specifically expressed in immune and hematopoietic cells. Expressed in bone marrow and blood cells. Levels vary considerably within this compartment. Present in at least 74% of immature CD34+ cells, whereas within the more mature population of CD33+ cells, it is present in only 10% of cells. Present in the majority of T-cells, while it is present in a minority of B-cells (at protein level).

It is found in the cytoplasm. Its subcellular location is the cell membrane. The protein localises to the membrane raft. It localises to the cytoskeleton. The protein resides in the membrane. The enzyme catalyses a 1,2-diacyl-sn-glycero-3-phospho-(1D-myo-inositol-3,4,5-trisphosphate) + H2O = a 1,2-diacyl-sn-glycero-3-phospho-(1D-myo-inositol-3,4-bisphosphate) + phosphate. The catalysed reaction is 1D-myo-inositol 1,3,4,5-tetrakisphosphate + H2O = 1D-myo-inositol 1,3,4-trisphosphate + phosphate. It catalyses the reaction a 1,2-diacyl-sn-glycero-3-phospho-(1D-myo-inositol-4,5-bisphosphate) + H2O = a 1,2-diacyl-sn-glycero-3-phospho-(1D-myo-inositol 4-phosphate) + phosphate. Its activity is regulated as follows. Activated upon translocation to the sites of synthesis of PtdIns(3,4,5)P3 in the membrane. In terms of biological role, phosphatidylinositol (PtdIns) phosphatase that specifically hydrolyzes the 5-phosphate of phosphatidylinositol-3,4,5-trisphosphate (PtdIns(3,4,5)P3) to produce PtdIns(3,4)P2, thereby negatively regulating the PI3K (phosphoinositide 3-kinase) pathways. Able also to hydrolyzes the 5-phosphate of phosphatidylinositol-4,5-bisphosphate (PtdIns(4,5)P3) and inositol 1,3,4,5-tetrakisphosphate. Acts as a negative regulator of B-cell antigen receptor signaling. Mediates signaling from the FC-gamma-RIIB receptor (FCGR2B), playing a central role in terminating signal transduction from activating immune/hematopoietic cell receptor systems. Acts as a negative regulator of myeloid cell proliferation/survival and chemotaxis, mast cell degranulation, immune cells homeostasis, integrin alpha-IIb/beta-3 signaling in platelets and JNK signaling in B-cells. Regulates proliferation of osteoclast precursors, macrophage programming, phagocytosis and activation and is required for endotoxin tolerance. Involved in the control of cell-cell junctions, CD32a signaling in neutrophils and modulation of EGF-induced phospholipase C activity. Key regulator of neutrophil migration, by governing the formation of the leading edge and polarization required for chemotaxis. Modulates FCGR3/CD16-mediated cytotoxicity in NK cells. Mediates the activin/TGF-beta-induced apoptosis through its Smad-dependent expression. This chain is Phosphatidylinositol 3,4,5-trisphosphate 5-phosphatase 1 (INPP5D), found in Homo sapiens (Human).